Consider the following 311-residue polypeptide: Taste receptor type 2 member 9 (311 aa).

At 1–9 (MPSTIEAIY) the chain is on the extracellular side. The chain crosses the membrane as a helical span at residues 10–32 (IILIAGELTIGIWGNGFIVLVNC). The Cytoplasmic segment spans residues 33–52 (IDWLKRRDVSLIDIILISLA). Residues 53-72 (ISRICLLCVISLDGFFILLF) form a helical membrane-spanning segment. Topologically, residues 73 to 86 (PGTYDTNVLESIMD) are extracellular. A helical membrane pass occupies residues 87-109 (AVWTFANNSSLWFTSCLSIFYLL). The Cytoplasmic portion of the chain corresponds to 110 to 128 (KIANISHPFFFWLKLKINK). The helical transmembrane segment at 129–146 (VILAILLGSFLISLIISF) threads the bilayer. The Extracellular portion of the chain corresponds to 147–179 (PINGMWYNLFKVSHEENITWAFKVSTIPGAFKQ). N163 carries an N-linked (GlcNAc...) asparagine glycan. A helical transmembrane segment spans residues 180 to 202 (LTLNLGAMVPFILCLISFFLLLF). Residues 203 to 233 (SLVRHTKQIQLHATGFRDPSTEAHMRAVKAV) lie on the Cytoplasmic side of the membrane. The chain crosses the membrane as a helical span at residues 234–256 (IIFLLLLILYYPVFLVMTSSTLI). Residues 257–260 (PQGK) are Extracellular-facing. Residues 261–283 (LVLMIGDIVTVIFPSSHSFILIM) traverse the membrane as a helical segment. Topologically, residues 284–311 (GNSKLRAAFLKMLRFVKGFLRRRKPFVP) are cytoplasmic.

It belongs to the G-protein coupled receptor T2R family.

It is found in the membrane. Functionally, gustducin-coupled receptor implicated in the perception of bitter compounds in the oral cavity and the gastrointestinal tract. Signals through PLCB2 and the calcium-regulated cation channel TRPM5. In Macaca mulatta (Rhesus macaque), this protein is Taste receptor type 2 member 9 (TAS2R9).